Consider the following 439-residue polypeptide: Xylose isomerase (439 aa).

Catalysis depends on residues His103 and Asp106. 7 residues coordinate Mg(2+): Glu234, Glu270, His273, Asp298, Asp309, Asp311, and Asp341.

This sequence belongs to the xylose isomerase family. Homotetramer. The cofactor is Mg(2+).

It is found in the cytoplasm. It carries out the reaction alpha-D-xylose = alpha-D-xylulofuranose. The sequence is that of Xylose isomerase from Bacteroides fragilis (strain YCH46).